The following is a 78-amino-acid chain: Sec-independent protein translocase protein TatA (78 aa).

A helical membrane pass occupies residues 1 to 21; sequence MGGISIWQLLIVALIVVLLFG. The disordered stretch occupies residues 40–78; sequence KSAMSSEEEKKAIEDSASEKTAQTEEKKTESKDKDKEQV. Residues 46-78 are compositionally biased toward basic and acidic residues; it reads EEEKKAIEDSASEKTAQTEEKKTESKDKDKEQV.

Belongs to the TatA/E family. The Tat system comprises two distinct complexes: a TatABC complex, containing multiple copies of TatA, TatB and TatC subunits, and a separate TatA complex, containing only TatA subunits. Substrates initially bind to the TatABC complex, which probably triggers association of the separate TatA complex to form the active translocon.

It localises to the cell inner membrane. Its function is as follows. Part of the twin-arginine translocation (Tat) system that transports large folded proteins containing a characteristic twin-arginine motif in their signal peptide across membranes. TatA could form the protein-conducting channel of the Tat system. This is Sec-independent protein translocase protein TatA from Shewanella sediminis (strain HAW-EB3).